The chain runs to 708 residues: Ion-translocating oxidoreductase complex subunit C (708 aa).

4Fe-4S ferredoxin-type domains lie at 369-397 (GEPQEEQSCIRCSACADACPADLLPQQLY) and 407-436 (KATTHNIADCIECGACAWVCPSNIPLVQYF). The [4Fe-4S] cluster site is built by C377, C380, C383, C387, C416, C419, C422, and C426. Residues 630-682 (AKARKLEQQQANAEPEEQIDPRKAAVEAAIARAKARKLEQQQANAEPEEQIDP) are disordered.

The protein belongs to the 4Fe4S bacterial-type ferredoxin family. RnfC subfamily. The complex is composed of six subunits: RsxA, RsxB, RsxC, RsxD, RsxE and RsxG. It depends on [4Fe-4S] cluster as a cofactor.

The protein resides in the cell inner membrane. In terms of biological role, part of a membrane-bound complex that couples electron transfer with translocation of ions across the membrane. Required to maintain the reduced state of SoxR. This is Ion-translocating oxidoreductase complex subunit C from Escherichia coli (strain UTI89 / UPEC).